We begin with the raw amino-acid sequence, 374 residues long: Pectate lyase 2 (374 aa).

The signal sequence occupies residues 1–22; that stretch reads MKYLLPTAAAGLLLLAAQPAMA. C93 and C176 are disulfide-bonded. Residues D150, D152, E187, and D191 each coordinate Ca(2+). R239 is an active-site residue. A disulfide bridge connects residues C350 and C373.

Belongs to the polysaccharide lyase 1 family. PLADES subfamily. Ca(2+) is required as a cofactor.

It is found in the secreted. The enzyme catalyses Eliminative cleavage of (1-&gt;4)-alpha-D-galacturonan to give oligosaccharides with 4-deoxy-alpha-D-galact-4-enuronosyl groups at their non-reducing ends.. The protein operates within glycan metabolism; pectin degradation; 2-dehydro-3-deoxy-D-gluconate from pectin: step 2/5. Functionally, involved in maceration and soft-rotting of plant tissue. This is Pectate lyase 2 (pel2) from Pectobacterium carotovorum (Erwinia carotovora).